The chain runs to 159 residues: ATP-dependent Clp protease adapter protein CLPS1, chloroplastic (159 aa).

The N-terminal 44 residues, 1–44 (METAICGRLALAPSSLFNSKSGDKHLVSKGPCVNRSILMTLSTS), are a transit peptide targeting the chloroplast.

It belongs to the ClpS family. As to quaternary structure, interacts with CLPC1 (via N-terminus) and CLPC2, but not with CLPt1 or CLPT2. Binds to ClpF; this interaction stimulates their association with ClpC. In terms of tissue distribution, expressed exclusively in photosynthetic green tissues with high levels in young, developing leaf tissues.

The protein localises to the plastid. It is found in the chloroplast stroma. Its function is as follows. Small adapter protein that modulate the activity of CLPC. Involved in plastid biogenesis in particular when chloroplast protein synthesis capacity is a limiting factor. Probably involved in substrate selection for plastid Clp protease system. Recruitment to ClpC chaperones is facilitated by CLPF thus forming a binary adapter for selective substrate recognition and delivery to plastid Clp protease system (CLPC). This is ATP-dependent Clp protease adapter protein CLPS1, chloroplastic from Arabidopsis thaliana (Mouse-ear cress).